The following is a 616-amino-acid chain: Proline--tRNA ligase (616 aa).

This sequence belongs to the class-II aminoacyl-tRNA synthetase family. ProS type 1 subfamily. As to quaternary structure, homodimer.

Its subcellular location is the cytoplasm. It catalyses the reaction tRNA(Pro) + L-proline + ATP = L-prolyl-tRNA(Pro) + AMP + diphosphate. Catalyzes the attachment of proline to tRNA(Pro) in a two-step reaction: proline is first activated by ATP to form Pro-AMP and then transferred to the acceptor end of tRNA(Pro). As ProRS can inadvertently accommodate and process non-cognate amino acids such as alanine and cysteine, to avoid such errors it has two additional distinct editing activities against alanine. One activity is designated as 'pretransfer' editing and involves the tRNA(Pro)-independent hydrolysis of activated Ala-AMP. The other activity is designated 'posttransfer' editing and involves deacylation of mischarged Ala-tRNA(Pro). The misacylated Cys-tRNA(Pro) is not edited by ProRS. In Lactococcus lactis subsp. cremoris (strain SK11), this protein is Proline--tRNA ligase.